Reading from the N-terminus, the 880-residue chain is Alanine--tRNA ligase (880 aa).

Zn(2+)-binding residues include His-567, His-571, Cys-669, and His-673.

It belongs to the class-II aminoacyl-tRNA synthetase family. Zn(2+) is required as a cofactor.

The protein resides in the cytoplasm. It carries out the reaction tRNA(Ala) + L-alanine + ATP = L-alanyl-tRNA(Ala) + AMP + diphosphate. In terms of biological role, catalyzes the attachment of alanine to tRNA(Ala) in a two-step reaction: alanine is first activated by ATP to form Ala-AMP and then transferred to the acceptor end of tRNA(Ala). Also edits incorrectly charged Ser-tRNA(Ala) and Gly-tRNA(Ala) via its editing domain. The chain is Alanine--tRNA ligase from Bacillus mycoides (strain KBAB4) (Bacillus weihenstephanensis).